A 491-amino-acid polypeptide reads, in one-letter code: Immediate early protein IE1 (491 aa).

A compositionally biased stretch (basic and acidic residues) spans 1–11 (MESSAKRKMDP). The tract at residues 1-24 (MESSAKRKMDPDNPDEGPSSKVPR) is nuclear localization signal. The segment at 1 to 30 (MESSAKRKMDPDNPDEGPSSKVPRPETPVT) is disordered. The segment at 132 to 346 (ILDKVHEPFE…SVMKRRIEEI (215 aa)) is interaction with host PML, interference with PML sumoylation and disruption of PML-associated nuclear bodies. The interaction with host STAT2 stretch occupies residues 373-445 (AIAEESDEEE…EEGAQEERED (73 aa)). The modulation of STAT3/STAT1 signaling stretch occupies residues 410–420 (ATIPLSSVIVA). The interaction with host STAT3 stretch occupies residues 410–445 (ATIPLSSVIVAENSDQEESEQSDEEEEEGAQEERED). The segment at 421–472 (ENSDQEESEQSDEEEEEGAQEEREDTVSVKSEPVSEIEEVAPEEEEDGAEEP) is acidic. The segment at 421–491 (ENSDQEESEQ…PMVTRSKADQ (71 aa)) is disordered. Residues 423–444 (SDQEESEQSDEEEEEGAQEERE) are compositionally biased toward acidic residues. The tract at residues 449–452 (VKSE) is interaction with host SUMO1. Residue lysine 450 forms a Glycyl lysine isopeptide (Lys-Gly) (interchain with G-Cter in SUMO) linkage. Over residues 455–470 (SEIEEVAPEEEEDGAE) the composition is skewed to acidic residues. The tract at residues 475 to 491 (SGGKSTHPMVTRSKADQ) is chromosome-tethering domain (CTD), binding to histones.

This sequence belongs to the HHV-5 IE1 protein family. In terms of assembly, forms homodimers. Interacts with human p53/TP53; this interaction inhibits p53/TP53-dependent transactivation activity. Interacts with host STAT1. Interacts with host STAT2; this interaction promotes viral growth and counteracts the antiviral interferon response. May also interact with the host STAT1-STAT2 heterodimer. Interacts with host STAT3; this interaction leads to STAT3 nuclear accumulation and disruption of IL6-induced STAT3 phosphorylation. Interacts with host PML; this interaction inhibits host PML de novo sumoylation and probably inhibits PML regulation of type I and type II interferon-induced gene expression. Interacts with host DAXX. Interacts with host SP100. Interacts with host E2F1. Interacts with host RB1. Interacts with host HDAC1; this interaction inhibits histone deacetylation and promotes viral transcription. Interacts with host HDAC2; this interaction inhibits histone deacetylation and promotes viral transcription. Interacts with host HDAC3; this interaction inhibits histone deacetylation and promotes viral transcription. Interacts with host PLSCR1; this interaction inhibits IE1 transactivating activity. Post-translationally, sumoylated by host PML. Sumoylation abolishes the interaction with host STAT2 and thus the IE1-mediated repression of interferon-stimulated genes.

Its subcellular location is the host nucleus. Its function is as follows. Plays an important role in transactivating viral early genes as well as activating its own promoter, probably by altering the viral chromatin structure. Expression of IE1 and IE2 proteins is critical for the establishment of lytic infection and reactivation from viral latency. Disrupts PML-associated ND10 nuclear bodies by interfering with host PML and SP100 sumoylation thereby altering the regulation of type I and type II interferon-induced gene expression. Promotes efficient viral growth by interacting with and directing host SP100 to degradation, leading to enhanced acetylation level of histones. In addition, functions in counteracting the host innate antiviral response. Inhibits the type I interferon pathway by directly interacting with and sequestrating host STAT2. Also targets type II interferon pathway by repressing IL6- and STAT3 target genes. Repression of STAT3 genes is due to STAT3 nuclear accumulation and disruption of IL6-induced STAT3 phosphorylation by IE1. This repression is followed by phosphorylation and activation of STAT1. Inhibits host ISG transcription by sequestering host ISGF3 in a PML- and STAT2- binding dependent manner. Alters host cell cycle progression, probably through its interaction with host E2F1 or RB1 that overcomes the RB1-mediated repression of E2F-responsive promoters. This Human cytomegalovirus (strain AD169) (HHV-5) protein is Immediate early protein IE1 (UL123).